Here is a 555-residue protein sequence, read N- to C-terminus: CTP synthase (555 aa).

The interval 1–267 is amidoligase domain; that stretch reads MTKFVFVTGG…AQQVLKFMHL (267 aa). CTP is bound at residue Ser-13. Position 13 (Ser-13) interacts with UTP. Residues 14–19 and Asp-71 each bind ATP; that span reads SIGKGI. Mg(2+)-binding residues include Asp-71 and Glu-141. Residues 148–150, 188–193, and Lys-224 contribute to the CTP site; these read DIE and KTKPTQ. UTP contacts are provided by residues 188–193 and Lys-224; that span reads KTKPTQ. ATP is bound at residue Ala-242. Residues 299–535 enclose the Glutamine amidotransferase type-1 domain; that stretch reads YVQLSDAYLS…VGACLADNGN (237 aa). L-glutamine is bound at residue Gly-354. The active-site Nucleophile; for glutamine hydrolysis is the Cys-381. L-glutamine-binding positions include 382-385, Glu-405, and Arg-463; that span reads LGMQ. Residues His-508 and Glu-510 contribute to the active site. Positions 536 to 555 are disordered; the sequence is NANHHDSTPAEPLVSEPLSS.

It belongs to the CTP synthase family. In terms of assembly, homotetramer.

It catalyses the reaction UTP + L-glutamine + ATP + H2O = CTP + L-glutamate + ADP + phosphate + 2 H(+). It carries out the reaction L-glutamine + H2O = L-glutamate + NH4(+). The enzyme catalyses UTP + NH4(+) + ATP = CTP + ADP + phosphate + 2 H(+). Its pathway is pyrimidine metabolism; CTP biosynthesis via de novo pathway; CTP from UDP: step 2/2. Allosterically activated by GTP, when glutamine is the substrate; GTP has no effect on the reaction when ammonia is the substrate. The allosteric effector GTP functions by stabilizing the protein conformation that binds the tetrahedral intermediate(s) formed during glutamine hydrolysis. Inhibited by the product CTP, via allosteric rather than competitive inhibition. Functionally, catalyzes the ATP-dependent amination of UTP to CTP with either L-glutamine or ammonia as the source of nitrogen. Regulates intracellular CTP levels through interactions with the four ribonucleotide triphosphates. The sequence is that of CTP synthase from Acaryochloris marina (strain MBIC 11017).